We begin with the raw amino-acid sequence, 328 residues long: Sulfate adenylyltransferase subunit 2 (328 aa).

Disordered stretches follow at residues alanine 15–histidine 34 and serine 304–phenylalanine 328.

Belongs to the PAPS reductase family. CysD subfamily. Heterodimer composed of CysD, the smaller subunit, and CysN.

The catalysed reaction is sulfate + ATP + H(+) = adenosine 5'-phosphosulfate + diphosphate. It functions in the pathway sulfur metabolism; hydrogen sulfide biosynthesis; sulfite from sulfate: step 1/3. Its function is as follows. With CysN forms the ATP sulfurylase (ATPS) that catalyzes the adenylation of sulfate producing adenosine 5'-phosphosulfate (APS) and diphosphate, the first enzymatic step in sulfur assimilation pathway. APS synthesis involves the formation of a high-energy phosphoric-sulfuric acid anhydride bond driven by GTP hydrolysis by CysN coupled to ATP hydrolysis by CysD. This is Sulfate adenylyltransferase subunit 2 from Rhodopseudomonas palustris (strain BisA53).